The following is a 314-amino-acid chain: Olfactory receptor 1E1 (314 aa).

The Extracellular portion of the chain corresponds to 1 to 25 (MMGQNQTSISDFLLLGLPIQPEQQN). A glycan (N-linked (GlcNAc...) asparagine) is linked at Asn-5. Residues 26–49 (LCYALFLAMYLTTLLGNLLIIVLI) form a helical membrane-spanning segment. Over 50–57 (RLDSHLHT) the chain is Cytoplasmic. The chain crosses the membrane as a helical span at residues 58-79 (PMYLFLSNLSFSDLCFSSVTIP). Residues 80–100 (KLLQNMQNQDPSIPYADCLTQ) lie on the Extracellular side of the membrane. A helical membrane pass occupies residues 101-120 (MYFFLLFGDLESFLLVAMAY). Residues 121–139 (DRYVAICFPLHYTAIMSPM) are Cytoplasmic-facing. A helical membrane pass occupies residues 140-158 (LCLALVALSWVLTTFHAML). Residues 159-195 (HTLLMARLCFCADNVIPHFFCDMSALLKLAFSDTRVN) are Extracellular-facing. The helical transmembrane segment at 196–219 (EWVIFIMGGLILVIPFLLILGSYA) threads the bilayer. Residues 220-236 (RIVSSILKVPSSKGICK) lie on the Cytoplasmic side of the membrane. A helical membrane pass occupies residues 237–259 (AFSTCGSHLSVVSLFYGTVIGLY). Residues 260-272 (LCSSANSSTLKDT) are Extracellular-facing. A helical transmembrane segment spans residues 273-292 (VMAMMYTVVTPMLNPFIYSL). Residues 293–314 (RNRDMKGALSRVIHQKKTFFSL) lie on the Cytoplasmic side of the membrane.

The protein belongs to the G-protein coupled receptor 1 family.

The protein resides in the cell membrane. Its function is as follows. Odorant receptor. This is Olfactory receptor 1E1 (OR1E1) from Homo sapiens (Human).